The sequence spans 263 residues: 4-hydroxy-tetrahydrodipicolinate reductase (263 aa).

Residues 7–12 (GFKGRM), 96–98 (GTT), and 122–125 (APNF) each bind NAD(+). Histidine 152 acts as the Proton donor/acceptor in catalysis. Histidine 153 lines the (S)-2,3,4,5-tetrahydrodipicolinate pocket. Lysine 156 acts as the Proton donor in catalysis. 162–163 (GT) contributes to the (S)-2,3,4,5-tetrahydrodipicolinate binding site.

It belongs to the DapB family.

The protein localises to the cytoplasm. It carries out the reaction (S)-2,3,4,5-tetrahydrodipicolinate + NAD(+) + H2O = (2S,4S)-4-hydroxy-2,3,4,5-tetrahydrodipicolinate + NADH + H(+). The catalysed reaction is (S)-2,3,4,5-tetrahydrodipicolinate + NADP(+) + H2O = (2S,4S)-4-hydroxy-2,3,4,5-tetrahydrodipicolinate + NADPH + H(+). It functions in the pathway amino-acid biosynthesis; L-lysine biosynthesis via DAP pathway; (S)-tetrahydrodipicolinate from L-aspartate: step 4/4. In terms of biological role, catalyzes the conversion of 4-hydroxy-tetrahydrodipicolinate (HTPA) to tetrahydrodipicolinate. This chain is 4-hydroxy-tetrahydrodipicolinate reductase, found in Listeria monocytogenes serotype 4b (strain F2365).